A 203-amino-acid polypeptide reads, in one-letter code: Endo-type membrane-bound lytic murein transglycosylase A (203 aa).

Positions 1–15 (MKLRWFAFLVVLLAG) are cleaved as a signal peptide. A lipid anchor (N-palmitoyl cysteine) is attached at Cys16. Cys16 is lipidated: S-diacylglycerol cysteine.

This sequence belongs to the transglycosylase Slt family.

The protein resides in the cell outer membrane. The enzyme catalyses Endolytic cleavage of the (1-&gt;4)-beta-glycosidic linkage between N-acetylmuramic acid (MurNAc) and N-acetylglucosamine (GlcNAc) residues in peptidoglycan with concomitant formation of a 1,6-anhydrobond in the MurNAc residue.. Murein-degrading enzyme. May play a role in recycling of muropeptides during cell elongation and/or cell division. Preferentially cleaves at a distance of more than two disaccharide units from the ends of the glycan chain. The polypeptide is Endo-type membrane-bound lytic murein transglycosylase A (Citrobacter koseri (strain ATCC BAA-895 / CDC 4225-83 / SGSC4696)).